Consider the following 350-residue polypeptide: Anthranilate phosphoribosyltransferase (350 aa).

Residues Gly-94, 97–98, Thr-102, 104–107, 122–130, and Ser-134 contribute to the 5-phospho-alpha-D-ribose 1-diphosphate site; these read GS, NVST, and KHGNRSVSS. Position 94 (Gly-94) interacts with anthranilate. Ser-106 contributes to the Mg(2+) binding site. An anthranilate-binding site is contributed by Asn-125. Arg-180 is a binding site for anthranilate. Mg(2+) contacts are provided by Asp-239 and Glu-240.

This sequence belongs to the anthranilate phosphoribosyltransferase family. Homodimer. The cofactor is Mg(2+).

The enzyme catalyses N-(5-phospho-beta-D-ribosyl)anthranilate + diphosphate = 5-phospho-alpha-D-ribose 1-diphosphate + anthranilate. The protein operates within amino-acid biosynthesis; L-tryptophan biosynthesis; L-tryptophan from chorismate: step 2/5. Functionally, catalyzes the transfer of the phosphoribosyl group of 5-phosphorylribose-1-pyrophosphate (PRPP) to anthranilate to yield N-(5'-phosphoribosyl)-anthranilate (PRA). The polypeptide is Anthranilate phosphoribosyltransferase (Geotalea uraniireducens (strain Rf4) (Geobacter uraniireducens)).